The primary structure comprises 432 residues: Glutamyl-tRNA reductase (432 aa).

Substrate contacts are provided by residues 49 to 52 (TCNR), Ser107, 112 to 114 (ETQ), and Gln118. The active-site Nucleophile is Cys50. Residue 186-191 (GAGEMG) coordinates NADP(+).

It belongs to the glutamyl-tRNA reductase family. In terms of assembly, homodimer.

It catalyses the reaction (S)-4-amino-5-oxopentanoate + tRNA(Glu) + NADP(+) = L-glutamyl-tRNA(Glu) + NADPH + H(+). The protein operates within porphyrin-containing compound metabolism; protoporphyrin-IX biosynthesis; 5-aminolevulinate from L-glutamyl-tRNA(Glu): step 1/2. Catalyzes the NADPH-dependent reduction of glutamyl-tRNA(Glu) to glutamate 1-semialdehyde (GSA). This is Glutamyl-tRNA reductase from Campylobacter jejuni subsp. jejuni serotype O:6 (strain 81116 / NCTC 11828).